We begin with the raw amino-acid sequence, 860 residues long: Valine--tRNA ligase (860 aa).

The 'HIGH' region motif lies at 43-53; the sequence is PTVSGALHVGH. The interval 469-491 is disordered; the sequence is LPVDPSSDAPTGYQESQRNQPGG. Residues 574 to 578 carry the 'KMSKS' region motif; sequence KMSKS. Position 577 (Lys577) interacts with ATP.

It belongs to the class-I aminoacyl-tRNA synthetase family. ValS type 2 subfamily. As to quaternary structure, monomer.

It localises to the cytoplasm. The enzyme catalyses tRNA(Val) + L-valine + ATP = L-valyl-tRNA(Val) + AMP + diphosphate. In terms of biological role, catalyzes the attachment of valine to tRNA(Val). As ValRS can inadvertently accommodate and process structurally similar amino acids such as threonine, to avoid such errors, it has a 'posttransfer' editing activity that hydrolyzes mischarged Thr-tRNA(Val) in a tRNA-dependent manner. The sequence is that of Valine--tRNA ligase from Salinispora tropica (strain ATCC BAA-916 / DSM 44818 / JCM 13857 / NBRC 105044 / CNB-440).